The sequence spans 409 residues: Bone morphogenetic protein 4 (409 aa).

The first 19 residues, 1–19, serve as a signal peptide directing secretion; the sequence is MIPGNRMLMVVLLCQVLLG. Residues 20 to 293 constitute a propeptide that is removed on maturation; that stretch reads GASHASLIPE…ALTRRRRAKR (274 aa). Ser91 is subject to Phosphoserine. Asn144 and Asn209 each carry an N-linked (GlcNAc...) asparagine glycan. The tract at residues 284-308 is disordered; it reads ALTRRRRAKRSPKHHPQRARKKNKN. 3 disulfides stabilise this stretch: Cys309-Cys374, Cys338-Cys406, and Cys342-Cys408. Asn351 and Asn366 each carry an N-linked (GlcNAc...) asparagine glycan.

The protein belongs to the TGF-beta family. Homodimer; disulfide-linked. Interacts with GREM2. Part of a complex consisting of TWSG1 and CHRD. Interacts with the serine proteases, HTRA1 and HTRA3; the interaction with either inhibits BMP4-mediated signaling. The HTRA protease activity is required for this inhibition. Interacts with SOSTDC1. Interacts with FBN1 (via N-terminal domain) and FBN2. Interacts with type I receptor BMPR1A. Interacts with type II receptor BMPR2. Interacts with FSTL1; this interaction inhibits the activation of the BMP4/Smad1/5/8 signaling pathway. Interacts with TGFBR3.

The protein resides in the secreted. It localises to the extracellular space. Its subcellular location is the extracellular matrix. Functionally, growth factor of the TGF-beta superfamily that plays essential roles in many developmental processes, including neurogenesis, vascular development, angiogenesis and osteogenesis. Acts in concert with PTHLH/PTHRP to stimulate ductal outgrowth during embryonic mammary development and to inhibit hair follicle induction. Initiates the canonical BMP signaling cascade by associating with type I receptor BMPR1A and type II receptor BMPR2. Once all three components are bound together in a complex at the cell surface, BMPR2 phosphorylates and activates BMPR1A. In turn, BMPR1A propagates signal by phosphorylating SMAD1/5/8 that travel to the nucleus and act as activators and repressors of transcription of target genes. Positively regulates the expression of odontogenic development regulator MSX1 via inducing the IPO7-mediated import of SMAD1 to the nucleus. Required for MSX1-mediated mesenchymal molar tooth bud development beyond the bud stage, via promoting Wnt signaling. Acts as a positive regulator of odontoblast differentiation during mesenchymal tooth germ formation, expression is repressed during the bell stage by MSX1-mediated inhibition of CTNNB1 signaling. Able to induce its own expression in dental mesenchymal cells and also in the neighboring dental epithelial cells via an MSX1-mediated pathway. Can also signal through non-canonical BMP pathways such as ERK/MAP kinase, PI3K/Akt, or SRC cascades. For example, induces SRC phosphorylation which, in turn, activates VEGFR2, leading to an angiogenic response. In Suncus murinus (Asian house shrew), this protein is Bone morphogenetic protein 4.